The following is a 652-amino-acid chain: Protein phosphatase Slingshot homolog 3 (652 aa).

The segment covering Met1 to Ser16 has biased composition (polar residues). The tract at residues Met1–Arg31 is disordered. Ala2 bears the N-acetylalanine mark. Phosphoserine occurs at positions 9, 37, 85, and 87. The disordered stretch occupies residues Gly43 to Gln91. Residues Asp80–Lys90 are compositionally biased toward polar residues. The DEK-C domain occupies Glu266–Ala321. In terms of domain architecture, Tyrosine-protein phosphatase spans Arg325 to Ala466. Catalysis depends on Cys410, which acts as the Phosphocysteine intermediate. Disordered regions lie at residues Glu484–Arg526, Leu540–Gln580, and Arg610–Ala652. Positions Leu540–Glu552 are enriched in low complexity. Residues Ser642–Ala652 show a composition bias toward basic and acidic residues.

Belongs to the protein-tyrosine phosphatase family. Does not bind to, or colocalize with, filamentous actin.

The protein localises to the cytoplasm. Its subcellular location is the cytoskeleton. It is found in the nucleus. The catalysed reaction is O-phospho-L-tyrosyl-[protein] + H2O = L-tyrosyl-[protein] + phosphate. The enzyme catalyses O-phospho-L-seryl-[protein] + H2O = L-seryl-[protein] + phosphate. It catalyses the reaction O-phospho-L-threonyl-[protein] + H2O = L-threonyl-[protein] + phosphate. Protein phosphatase which may play a role in the regulation of actin filament dynamics. Can dephosphorylate and activate the actin binding/depolymerizing factor cofilin, which subsequently binds to actin filaments and stimulates their disassembly. The sequence is that of Protein phosphatase Slingshot homolog 3 (Ssh3) from Rattus norvegicus (Rat).